We begin with the raw amino-acid sequence, 2049 residues long: Polyglutamine-repeat protein pqn-41 (2049 aa).

The disordered stretch occupies residues 1–58 (MKPKKLQQGSDSAHTSDTESTKTCEKTAKKLPKTQKKLQKSKKTAKKRRDEEFRIFFP). Positions 1-1601 (MKPKKLQQGS…TTSQHQQSIQ (1601 aa)) are sufficient to prevent linker cell death. Residues 14–28 (HTSDTESTKTCEKTA) show a composition bias toward basic and acidic residues. Positions 29-47 (KKLPKTQKKLQKSKKTAKK) are enriched in basic residues. Coiled coils occupy residues 264 to 302 (RRQE…ANSD) and 396 to 432 (TNAG…DRNH). Positions 459–492 (RGRNSTENSDSESSSEASEPPDDVITKEEPTDFS) are disordered. The segment covering 463-476 (STENSDSESSSEAS) has biased composition (low complexity). Coiled-coil stretches lie at residues 686–730 (ESFE…SFET), 756–796 (ISAD…REFS), and 822–880 (QSSI…ARKL). The span at 1134-1150 (QQQHNHQNFQQQQQGNH) shows a compositional bias: low complexity. 4 disordered regions span residues 1134 to 1198 (QQQH…ENAA), 1236 to 1265 (AAAA…QQQN), 1481 to 1616 (YKQS…GAAY), and 1636 to 1661 (ATPK…TSQA). Residues 1162-1171 (QKRKYTKRKA) are compositionally biased toward basic residues. The span at 1176 to 1194 (AVASSSDQNGMKSPGSSAM) shows a compositional bias: polar residues. Over residues 1495–1533 (STSSSSAAPASAPAPRAGAGAGATSSSAASSSTSTPSSS) the composition is skewed to low complexity. Positions 1534-1546 (SHHKKSSPPHHQK) are enriched in basic residues. Composition is skewed to low complexity over residues 1569 to 1604 (SAPI…QFSQ) and 1649 to 1661 (ATQQ…TSQA). 2 coiled-coil regions span residues 1659 to 1685 (SQAS…AAAA) and 1725 to 1801 (QQYL…LQNI). Residues 1836–1858 (AQAQQAPPTSQPSQAATPQQQQQ) form a disordered region. 2 coiled-coil regions span residues 1863 to 1961 (RQME…AAAA) and 1991 to 2041 (SAQQ…AQQK).

In terms of tissue distribution, expressed in the linker cell just before it dies.

Its subcellular location is the cytoplasm. In males, required for non-apoptotic death of the linker cell once it has finished guiding gonad elongation at the end of larval development. May be involved in nuclear envelope crenellation in the linker cell. In terms of biological role, in males, promotes linker cell survival. The chain is Polyglutamine-repeat protein pqn-41 from Caenorhabditis elegans.